We begin with the raw amino-acid sequence, 485 residues long: Glutamyl-tRNA(Gln) amidotransferase subunit A (485 aa).

Catalysis depends on charge relay system residues K79 and S154. The Acyl-ester intermediate role is filled by S178.

Belongs to the amidase family. GatA subfamily. In terms of assembly, heterotrimer of A, B and C subunits.

The catalysed reaction is L-glutamyl-tRNA(Gln) + L-glutamine + ATP + H2O = L-glutaminyl-tRNA(Gln) + L-glutamate + ADP + phosphate + H(+). Allows the formation of correctly charged Gln-tRNA(Gln) through the transamidation of misacylated Glu-tRNA(Gln) in organisms which lack glutaminyl-tRNA synthetase. The reaction takes place in the presence of glutamine and ATP through an activated gamma-phospho-Glu-tRNA(Gln). The chain is Glutamyl-tRNA(Gln) amidotransferase subunit A from Clostridium botulinum (strain ATCC 19397 / Type A).